The following is a 122-amino-acid chain: Small ribosomal subunit protein uS13 (122 aa).

The interval 99–122 (RGQRTHTNARTRKGPAKAIAGKKK) is disordered.

The protein belongs to the universal ribosomal protein uS13 family. As to quaternary structure, part of the 30S ribosomal subunit. Forms a loose heterodimer with protein S19. Forms two bridges to the 50S subunit in the 70S ribosome.

Functionally, located at the top of the head of the 30S subunit, it contacts several helices of the 16S rRNA. In the 70S ribosome it contacts the 23S rRNA (bridge B1a) and protein L5 of the 50S subunit (bridge B1b), connecting the 2 subunits; these bridges are implicated in subunit movement. Contacts the tRNAs in the A and P-sites. The chain is Small ribosomal subunit protein uS13 from Parvibaculum lavamentivorans (strain DS-1 / DSM 13023 / NCIMB 13966).